The primary structure comprises 691 residues: Elongation factor G (691 aa).

One can recognise a tr-type G domain in the interval 8–283 (EKQRNIGIMA…AVVQYLPSPL (276 aa)). GTP is bound by residues 17-24 (AHIDAGKT), 81-85 (DTPGH), and 135-138 (NKMD).

It belongs to the TRAFAC class translation factor GTPase superfamily. Classic translation factor GTPase family. EF-G/EF-2 subfamily.

The protein resides in the cytoplasm. In terms of biological role, catalyzes the GTP-dependent ribosomal translocation step during translation elongation. During this step, the ribosome changes from the pre-translocational (PRE) to the post-translocational (POST) state as the newly formed A-site-bound peptidyl-tRNA and P-site-bound deacylated tRNA move to the P and E sites, respectively. Catalyzes the coordinated movement of the two tRNA molecules, the mRNA and conformational changes in the ribosome. The polypeptide is Elongation factor G (Lawsonia intracellularis (strain PHE/MN1-00)).